The chain runs to 28 residues: Cyclotide vodo I1 (28 aa).

Cystine bridges form between C4-C18, C8-C20, and C13-C25.

Post-translationally, this is a cyclic peptide. Contains 3 disulfide bonds.

Functionally, probably participates in a plant defense mechanism. The polypeptide is Cyclotide vodo I1 (Viola odorata (Sweet violet)).